The sequence spans 286 residues: ATP synthase gamma chain (286 aa).

The protein belongs to the ATPase gamma chain family. As to quaternary structure, F-type ATPases have 2 components, CF(1) - the catalytic core - and CF(0) - the membrane proton channel. CF(1) has five subunits: alpha(3), beta(3), gamma(1), delta(1), epsilon(1). CF(0) has three main subunits: a, b and c.

It localises to the cell inner membrane. Its function is as follows. Produces ATP from ADP in the presence of a proton gradient across the membrane. The gamma chain is believed to be important in regulating ATPase activity and the flow of protons through the CF(0) complex. This is ATP synthase gamma chain from Dechloromonas aromatica (strain RCB).